A 1014-amino-acid chain; its full sequence is 2-oxoglutarate dehydrogenase, mitochondrial (1014 aa).

The N-terminal 30 residues, Met1–Lys30, are a transit peptide targeting the mitochondrion. Residues Arg306, Asp406, Asn439, and Ile441 each coordinate thiamine diphosphate. Residues Asp406, Asn439, and Ile441 each coordinate Mg(2+).

This sequence belongs to the alpha-ketoglutarate dehydrogenase family. In terms of assembly, component of the 2-oxoglutarate dehydrogenase complex (OGDC), also called alpha-ketoglutarate dehydrogenase (KGDH) complex. The copmplex is composed of the catalytic subunits OGDH (2-oxoglutarate dehydrogenase KGD1; also called E1 subunit), DLST (dihydrolipoamide succinyltransferase KGD2; also called E2 subunit) and DLD (dihydrolipoamide dehydrogenase LPD1; also called E3 subunit), and the assembly factor KGD4. It depends on thiamine diphosphate as a cofactor. The cofactor is Mg(2+).

It localises to the mitochondrion. The protein resides in the mitochondrion matrix. The protein localises to the mitochondrion nucleoid. The enzyme catalyses N(6)-[(R)-lipoyl]-L-lysyl-[protein] + 2-oxoglutarate + H(+) = N(6)-[(R)-S(8)-succinyldihydrolipoyl]-L-lysyl-[protein] + CO2. Its activity is regulated as follows. Catabolite repressed. Its function is as follows. The 2-oxoglutarate dehydrogenase complex catalyzes the overall conversion of 2-oxoglutarate to succinyl-CoA and CO(2). It contains multiple copies of three enzymatic components: 2-oxoglutarate dehydrogenase (E1), dihydrolipoamide succinyltransferase (E2) and lipoamide dehydrogenase (E3). In Saccharomyces cerevisiae (strain ATCC 204508 / S288c) (Baker's yeast), this protein is 2-oxoglutarate dehydrogenase, mitochondrial (KGD1).